The following is a 350-amino-acid chain: tRNA U34 carboxymethyltransferase (350 aa).

Residues lysine 101, tryptophan 125, lysine 130, glycine 150, 172-174, 208-209, methionine 224, tyrosine 228, and arginine 343 contribute to the carboxy-S-adenosyl-L-methionine site; these read DPS and LE.

It belongs to the class I-like SAM-binding methyltransferase superfamily. CmoB family. Homotetramer.

The enzyme catalyses carboxy-S-adenosyl-L-methionine + 5-hydroxyuridine(34) in tRNA = 5-carboxymethoxyuridine(34) in tRNA + S-adenosyl-L-homocysteine + H(+). In terms of biological role, catalyzes carboxymethyl transfer from carboxy-S-adenosyl-L-methionine (Cx-SAM) to 5-hydroxyuridine (ho5U) to form 5-carboxymethoxyuridine (cmo5U) at position 34 in tRNAs. The sequence is that of tRNA U34 carboxymethyltransferase from Psychrobacter arcticus (strain DSM 17307 / VKM B-2377 / 273-4).